Here is a 338-residue protein sequence, read N- to C-terminus: Probable tRNA pseudouridine synthase B (338 aa).

The Nucleophile role is filled by Asp-82. A PUA domain is found at 250-325 (LPKVWIRDSA…IAVDVDKVFM (76 aa)).

The protein belongs to the pseudouridine synthase TruB family. Type 2 subfamily.

The enzyme catalyses uridine(55) in tRNA = pseudouridine(55) in tRNA. In terms of biological role, could be responsible for synthesis of pseudouridine from uracil-55 in the psi GC loop of transfer RNAs. The polypeptide is Probable tRNA pseudouridine synthase B (Thermococcus kodakarensis (strain ATCC BAA-918 / JCM 12380 / KOD1) (Pyrococcus kodakaraensis (strain KOD1))).